The sequence spans 207 residues: N-(5'-phosphoribosyl)anthranilate isomerase (207 aa).

This sequence belongs to the TrpF family.

It carries out the reaction N-(5-phospho-beta-D-ribosyl)anthranilate = 1-(2-carboxyphenylamino)-1-deoxy-D-ribulose 5-phosphate. The protein operates within amino-acid biosynthesis; L-tryptophan biosynthesis; L-tryptophan from chorismate: step 3/5. The sequence is that of N-(5'-phosphoribosyl)anthranilate isomerase from Legionella pneumophila (strain Corby).